Consider the following 338-residue polypeptide: Lipoate-protein ligase A (338 aa).

The BPL/LPL catalytic domain occupies 29–216 (PATQRVLFLW…AFFAHYGERI (188 aa)). ATP contacts are provided by residues arginine 71, 76-79 (GAVF), and lysine 134. Lysine 134 serves as a coordination point for (R)-lipoate.

The protein belongs to the LplA family. As to quaternary structure, monomer.

It localises to the cytoplasm. It catalyses the reaction L-lysyl-[lipoyl-carrier protein] + (R)-lipoate + ATP = N(6)-[(R)-lipoyl]-L-lysyl-[lipoyl-carrier protein] + AMP + diphosphate + H(+). It participates in protein modification; protein lipoylation via exogenous pathway; protein N(6)-(lipoyl)lysine from lipoate: step 1/2. The protein operates within protein modification; protein lipoylation via exogenous pathway; protein N(6)-(lipoyl)lysine from lipoate: step 2/2. Functionally, catalyzes both the ATP-dependent activation of exogenously supplied lipoate to lipoyl-AMP and the transfer of the activated lipoyl onto the lipoyl domains of lipoate-dependent enzymes. In Salmonella typhi, this protein is Lipoate-protein ligase A.